The chain runs to 217 residues: t-SNARE VTI1 (217 aa).

Position 2 is an N-acetylserine (S2). Residues 2 to 194 are Cytoplasmic-facing; sequence SSLLISYESD…TMTRRLVANK (193 aa). Phosphoserine is present on residues S110 and S149. A t-SNARE coiled-coil homology domain is found at 124-186; that stretch reads HAILQKSGDR…DKSIKTLKTM (63 aa). A helical; Anchor for type IV membrane protein membrane pass occupies residues 195–215; the sequence is FISYAIIAVLILLILLVLFSK. The Vesicular portion of the chain corresponds to 216 to 217; that stretch reads FK.

This sequence belongs to the VTI1 family. In terms of assembly, forms SNARE complexes with the t-SNAREs VAM3 and VAM7, and the v-SNAREs NYV1 and YKT6 on vacuolar membranes, which are involved in biosynthetic transport pathways to the vacuole and in homotypic vacuole fusion. Forms SNARE complexes with the cis-Golgi t-SNARE SED5 and the v-SNAREs SFT1 and YTK6, which are involved in retrograde traffic to the cis-Golgi compartment. Forms SNARE complexes with the t-SNAREs TLG1 and TLG2, and either the v-SNARE SNC1 or SNC2, which are involved in traffic from early endosomes to the trans-Golgi network (TGN). Forms SNARE complexes with the t-SNAREs PEP12 and either SYN8 or TLG1, and the v-SNARE SNC1, which are involved in traffic from the TGN to the prevacuolar compartment (PVC).

The protein localises to the prevacuolar compartment membrane. It localises to the golgi apparatus membrane. T-SNARE found in various SNARE complexes involved in multiple transport pathways. The composition of the t-SNARE complexes is specific for a limited number of v-SNAREs and therefore allows only the vesicles carrying the matching v-SNARE to fuse. The protein is t-SNARE VTI1 (VTI1) of Saccharomyces cerevisiae (strain ATCC 204508 / S288c) (Baker's yeast).